The sequence spans 252 residues: Mannose-P-dolichol utilization defect 1 protein homolog (252 aa).

Positions 34–100 constitute a PQ-loop 1 domain; sequence KALLSKGLGL…HGYPFSAWGD (67 aa). 7 helical membrane passes run 41–61, 69–89, 98–118, 126–146, 148–168, 180–200, and 207–227; these read LGLAIIAGSVLVKVPQVLKIL, INIVGVVLDLLAISFHLSYNF, WGDSTFLAIQTVTIAVLVLFF, GLFLVGYVVLMYVLNSGLTPM, VLFTIQSCNIPILLVGKLSQA, LSAATVIMMFAGSVARIFTSI, and MIILTFIASTFANSVILGQLI. Positions 157–211 constitute a PQ-loop 2 domain; that stretch reads IPILLVGKLSQAYTNYQAGSTGQLSAATVIMMFAGSVARIFTSIQETGDFMIILT.

This sequence belongs to the MPDU1 (TC 2.A.43.3) family.

It is found in the membrane. The protein is Mannose-P-dolichol utilization defect 1 protein homolog of Drosophila melanogaster (Fruit fly).